The sequence spans 137 residues: MNIALVAHDQMKNTMVGFCIGYESILKKYGLYATGTTGKRIMDETELNINRLASGPLGGDQQIGSLIVTQEIDLVIFLRDPLTSQAHETDIQALIRLCDVYHVPIATNLASAEIFIKALDRGELSWREVRKSKSQRI.

An MGS-like domain is found at methionine 1–isoleucine 137. Residues histidine 8, lysine 12, threonine 34 to threonine 37, and serine 54 to glycine 55 contribute to the substrate site. Aspartate 60 serves as the catalytic Proton donor/acceptor. Histidine 87 contacts substrate.

This sequence belongs to the methylglyoxal synthase family.

The enzyme catalyses dihydroxyacetone phosphate = methylglyoxal + phosphate. In terms of biological role, catalyzes the formation of methylglyoxal from dihydroxyacetone phosphate. The polypeptide is Methylglyoxal synthase (Clostridioides difficile (strain 630) (Peptoclostridium difficile)).